Consider the following 207-residue polypeptide: Large ribosomal subunit protein uL4 (207 aa).

Residues His49–Ile78 are disordered.

It belongs to the universal ribosomal protein uL4 family. Part of the 50S ribosomal subunit.

Its function is as follows. One of the primary rRNA binding proteins, this protein initially binds near the 5'-end of the 23S rRNA. It is important during the early stages of 50S assembly. It makes multiple contacts with different domains of the 23S rRNA in the assembled 50S subunit and ribosome. In terms of biological role, forms part of the polypeptide exit tunnel. The protein is Large ribosomal subunit protein uL4 of Streptococcus suis (strain 98HAH33).